The primary structure comprises 264 residues: Acyl-[acyl-carrier-protein]--UDP-N-acetylglucosamine O-acyltransferase (264 aa).

The protein belongs to the transferase hexapeptide repeat family. LpxA subfamily. As to quaternary structure, homotrimer.

It is found in the cytoplasm. The enzyme catalyses a (3R)-hydroxyacyl-[ACP] + UDP-N-acetyl-alpha-D-glucosamine = a UDP-3-O-[(3R)-3-hydroxyacyl]-N-acetyl-alpha-D-glucosamine + holo-[ACP]. It participates in glycolipid biosynthesis; lipid IV(A) biosynthesis; lipid IV(A) from (3R)-3-hydroxytetradecanoyl-[acyl-carrier-protein] and UDP-N-acetyl-alpha-D-glucosamine: step 1/6. In terms of biological role, involved in the biosynthesis of lipid A, a phosphorylated glycolipid that anchors the lipopolysaccharide to the outer membrane of the cell. The chain is Acyl-[acyl-carrier-protein]--UDP-N-acetylglucosamine O-acyltransferase from Chlorobium phaeobacteroides (strain DSM 266 / SMG 266 / 2430).